The chain runs to 580 residues: Acyl-coenzyme A synthetase ACSM4, mitochondrial (580 aa).

Residues 1–22 (MKIFFRYQTFRFIWLTKPPGRR) constitute a mitochondrion transit peptide. ATP-binding positions include 229 to 237 (TSGTTGFPK), 368 to 373 (EGYGQT), D455, R470, and K566.

Belongs to the ATP-dependent AMP-binding enzyme family. Mg(2+) serves as cofactor. Requires Mn(2+) as cofactor.

The protein localises to the mitochondrion. The enzyme catalyses a medium-chain fatty acid + ATP + CoA = a medium-chain fatty acyl-CoA + AMP + diphosphate. The catalysed reaction is hexanoate + ATP + CoA = hexanoyl-CoA + AMP + diphosphate. It catalyses the reaction octanoate + ATP + CoA = octanoyl-CoA + AMP + diphosphate. It carries out the reaction decanoate + ATP + CoA = decanoyl-CoA + AMP + diphosphate. The enzyme catalyses dodecanoate + ATP + CoA = dodecanoyl-CoA + AMP + diphosphate. In terms of biological role, catalyzes the activation of fatty acids by CoA to produce an acyl-CoA, the first step in fatty acid metabolism. Capable of activating medium-chain fatty acids with a preference for C6-12 fatty acids. In Homo sapiens (Human), this protein is Acyl-coenzyme A synthetase ACSM4, mitochondrial (ACSM4).